Consider the following 290-residue polypeptide: Ventral anterior homeobox 2 (290 aa).

The span at 1–17 (MGDGGAERDRGPARRAE) shows a compositional bias: basic and acidic residues. The interval 1–75 (MGDGGAERDR…GQPGPGEADH (75 aa)) is disordered. Residues 102 to 161 (PKRTRTSFTAEQLYRLEMEFQRCQYVVGRERTELARQLNLSETQVKVWFQNRRTKQKKDQ) constitute a DNA-binding region (homeobox). The disordered stretch occupies residues 205 to 240 (PSLPGLPASHRGTSLGDPRNSSPRLNPLSSASASPP). The segment covering 222 to 238 (PRNSSPRLNPLSSASAS) has biased composition (low complexity).

It belongs to the EMX homeobox family.

It is found in the nucleus. In terms of biological role, transcription factor that may function in dorsoventral specification of the forebrain. Regulates the expression of Wnt signaling antagonists including the expression of a truncated TCF7L2 isoform that cannot bind CTNNB1 and acts therefore as a potent dominant-negative Wnt antagonist. Plays a crucial role in eye development and, in particular, in the specification of the ventral optic vesicle. May be a regulator of axial polarization in the retina. The sequence is that of Ventral anterior homeobox 2 (VAX2) from Homo sapiens (Human).